Reading from the N-terminus, the 210-residue chain is Thymidylate kinase (210 aa).

Residue 10 to 17 participates in ATP binding; that stretch reads GPEGAGKS.

Belongs to the thymidylate kinase family.

It carries out the reaction dTMP + ATP = dTDP + ADP. Functionally, phosphorylation of dTMP to form dTDP in both de novo and salvage pathways of dTTP synthesis. The sequence is that of Thymidylate kinase from Pseudomonas paraeruginosa (strain DSM 24068 / PA7) (Pseudomonas aeruginosa (strain PA7)).